We begin with the raw amino-acid sequence, 427 residues long: MGTPKPRILPWLVSQLDLGQLEGVAWVNKSRTRFRIPWKHGLRQDAQQEDFGIFQAWAEATGAYVPGRDKPDLPTWKRNFRSALNRKEGLRLAEDRSKDPHDPHKIYEFVNSGVGDFSQPDTSPDTNGGGSTSDTQEDILDELLGNMVLAPLPDPGPPSLAVAPEPCPQPLRSPSLDNPTPFPNLGPSENPLKRLLVPGEEWEFEVTAFYRGRQVFQQTISCPEGLRLVGSEVGDRTLPGWPVTLPDPGMSLTDRGVMSYVRHVLSCLGGGLALWRAGQWLWAQRLGHCHTYWAVSEELLPNSGHGPDGEVPKDKEGGVFDLGPFIVDLITFTEGSGRSPRYALWFCVGESWPQDQPWTKRLVMVKVVPTCLRALVEMARVGGASSLENTVDLHISNSHPLSLTSDQYKAYLQDLVEGMDFQGPGES.

Residue T3 is modified to Phosphothreonine. The segment at residues 5–111 (KPRILPWLVS…DPHKIYEFVN (107 aa)) is a DNA-binding region (IRF tryptophan pentad repeat). S14 carries the post-translational modification Phosphoserine. At T75 the chain carries Phosphothreonine. Positions 91–107 (RLAEDRSKDPHDPHKIY) are enriched in basic and acidic residues. The interval 91–136 (RLAEDRSKDPHDPHKIYEFVNSGVGDFSQPDTSPDTNGGGSTSDTQ) is disordered. Phosphoserine occurs at positions 97 and 123. A Nuclear export signal motif is present at residues 139 to 149 (ILDELLGNMVL). A mediates interaction with ZDHHC11 region spans residues 141–427 (DELLGNMVLA…GMDFQGPGES (287 aa)). S175 carries the (Microbial infection) Phosphoserine modification. T180 carries the post-translational modification Phosphothreonine. S188 bears the Phosphoserine mark. Residue K193 forms a Glycyl lysine isopeptide (Lys-Gly) (interchain with G-Cter in ISG15) linkage. Residues 200–360 (EEWEFEVTAF…SWPQDQPWTK (161 aa)) form an interaction with HERC5 region. Phosphothreonine is present on residues T237, T244, and T253. C267 and C289 are oxidised to a cystine. Glycyl lysine isopeptide (Lys-Gly) (interchain with G-Cter in ISG15) cross-links involve residues K360 and K366. K366 carries the post-translational modification N6-acetyllysine. S385 is subject to Phosphoserine. Residue S386 is modified to Diphosphoserine. S386 bears the Phosphoserine; by TBK1 mark. A Phosphoserine; by IKKE and TBK1 modification is found at S396. Position 398 is a phosphoserine (S398). T404 bears the Phosphothreonine mark. S427 is subject to Phosphoserine.

The protein belongs to the IRF family. Monomer. Homodimer; phosphorylation-induced. Interacts (when phosphorylated) with CREBBP. Interacts with MAVS (via phosphorylated pLxIS motif). Interacts with TICAM1 (via phosphorylated pLxIS motif). Interacts with STING1 (via phosphorylated pLxIS motif). Interacts with IKBKE and TBK1. Interacts with TICAM2. Interacts with RBCK1. Interacts with HERC5. Interacts with DDX3X (phosphorylated at 'Ser-102'); the interaction allows the phosphorylation and activation of IRF3 by IKBKE. Interacts with TRIM21 and ULK1, in the presence of TRIM21; this interaction leads to IRF3 degradation by autophagy. Interacts with RIOK3; RIOK3 probably mediates the interaction of TBK1 with IRF3. Interacts with ILRUN; the interaction inhibits IRF3 binding to its DNA consensus sequence. Interacts with LYAR; this interaction impairs IRF3 DNA-binding activity. Interacts with TRAF3. Interacts with ZDHHC11; ZDHHC11 recruits IRF3 to STING1 upon DNA virus infection and thereby promotes IRF3 activation. Interacts with HSP90AA1; the interaction mediates IRF3 association with TOMM70. Interacts with BCL2; the interaction decreases upon Sendai virus infection. Interacts with BAX; the interaction is direct, increases upon Sendai virus infection and mediates the formation of the apoptosis complex TOMM70:HSP90AA1:IRF3:BAX. Interacts with DDX56. Interacts with NBR1. In terms of assembly, (Microbial infection) Interacts with rotavirus A NSP1 (via pLxIS motif); this interaction leads to the proteasome-dependent degradation of IRF3. As to quaternary structure, (Microbial infection) Interacts with herpes virus 8/HHV-8 protein VIRF1. (Microbial infection) Interacts with Seneca Valley virus protease 3C; this interaction is involved in the suppression of IRF3 expression and phosphorylation by the virus. In terms of assembly, (Microbial infection) Interacts with herpes virus 2/HHV-2 protein ICP27; this interaction inhibits IRF3 phosphorylation and nuclear translocation. As to quaternary structure, (Microbial infection) Interacts with human cytomegalovirus protein UL44; this interaction prevents IRF3 binding to its promoters. (Microbial infection) Interacts with the two fragments of MERS-COV protein N produced by CASP6 through proteolytic cleavage; both interactions inhibit IRF3 nuclear translocation after activation and IFN signaling. Constitutively phosphorylated on many Ser/Thr residues. Activated following phosphorylation by TBK1 and IKBKE. Innate adapter proteins, such as MAVS, STING1 or TICAM1, are first activated by viral RNA, cytosolic DNA, and bacterial lipopolysaccharide (LPS), respectively, leading to activation of the kinases TBK1 and IKBKE. These kinases then phosphorylate the adapter proteins on the pLxIS motif, leading to recruitment of IRF3, thereby licensing IRF3 for phosphorylation by TBK1. Phosphorylation at Ser-386 is followed by pyrophosphorylation at the same residue, promoting phosphorylation at Ser-396. Phosphorylated IRF3 dissociates from the adapter proteins, dimerizes, and then enters the nucleus to induce IFNs. In terms of processing, pyrophosphorylated by UAP1 following phosphorylation at Ser-386 by TBK1. Pyrophosphorylation promotes subsequent phosphorylation at Ser-396, leading to homodimerization of IRF3. Post-translationally, acetylation at Lys-366 by KAT8 inhibits recruimtent to promoters and transcription factor activity. Acetylation by KAT8 is promoted by phosphorylation at Ser-396. Ubiquitinated; ubiquitination involves RBCK1 leading to proteasomal degradation. Polyubiquitinated; ubiquitination involves TRIM21 leading to proteasomal degradation. Ubiquitinated by UBE3C, leading to its degradation. Deubiquitinated by USP5 on both 'Lys-48'-linked unanchored and 'Lys-63'-linked anchored polyubiquitin, leading to inhibition of anti-RNA viral innate immunity. In terms of processing, ISGylated by HERC5 resulting in sustained IRF3 activation and in the inhibition of IRF3 ubiquitination by disrupting PIN1 binding. The phosphorylation state of IRF3 does not alter ISGylation. Post-translationally, proteolytically cleaved by apoptotic caspases during apoptosis, leading to its inactivation. Cleavage by CASP3 during virus-induced apoptosis inactivates it, preventing cytokine overproduction. (Microbial infection) ISGylated. ISGylation is cleaved and removed by SARS-COV-2 nsp3 which attenuates type I interferon responses. In terms of processing, (Microbial infection) Phosphorylation and subsequent activation of IRF3 is inhibited by vaccinia virus protein E3. Post-translationally, (Microbial infection) Phosphorylated by herpes simplex virus 1/HHV-1 US3 at Ser-175 to prevent IRF3 activation. Expressed constitutively in a variety of tissues.

It localises to the cytoplasm. The protein resides in the nucleus. It is found in the mitochondrion. In the absence of viral infection, maintained as a monomer in an autoinhibited state. Phosphorylation by TBK1 and IKBKE disrupts this autoinhibition leading to the liberation of the DNA-binding and dimerization activities and its nuclear localization where it can activate type I IFN and ISG genes. Phosphorylation and activation follow the following steps: innate adapter proteins, such as MAVS, STING1 or TICAM1, are first activated by viral RNA, cytosolic DNA and bacterial lipopolysaccharide (LPS), respectively, leading to activation of the kinases TBK1 and IKBKE. These kinases then phosphorylate the adapter proteins on their pLxIS motif, leading to recruitment of IRF3, thereby licensing IRF3 for phosphorylation by TBK1. Phosphorylated IRF3 dissociates from the adapter proteins, dimerizes, and then enters the nucleus to induce IFNs. Its activity is regulated as follows. (Microbial infection) Activated upon coronavirus SARS-CoV-2 infection. Functionally, key transcriptional regulator of type I interferon (IFN)-dependent immune responses which plays a critical role in the innate immune response against DNA and RNA viruses. Regulates the transcription of type I IFN genes (IFN-alpha and IFN-beta) and IFN-stimulated genes (ISG) by binding to an interferon-stimulated response element (ISRE) in their promoters. Acts as a more potent activator of the IFN-beta (IFNB) gene than the IFN-alpha (IFNA) gene and plays a critical role in both the early and late phases of the IFNA/B gene induction. Found in an inactive form in the cytoplasm of uninfected cells and following viral infection, double-stranded RNA (dsRNA), or toll-like receptor (TLR) signaling, is phosphorylated by IKBKE and TBK1 kinases. This induces a conformational change, leading to its dimerization and nuclear localization and association with CREB binding protein (CREBBP) to form dsRNA-activated factor 1 (DRAF1), a complex which activates the transcription of the type I IFN and ISG genes. Can activate distinct gene expression programs in macrophages and can induce significant apoptosis in primary macrophages. In response to Sendai virus infection, is recruited by TOMM70:HSP90AA1 to mitochondrion and forms an apoptosis complex TOMM70:HSP90AA1:IRF3:BAX inducing apoptosis. Key transcription factor regulating the IFN response during SARS-CoV-2 infection. In Homo sapiens (Human), this protein is Interferon regulatory factor 3.